A 473-amino-acid polypeptide reads, in one-letter code: Putative protein TIC 214 C-terminal part (473 aa).

It belongs to the TIC214 family. In terms of assembly, part of the Tic complex.

The protein resides in the plastid. The protein localises to the chloroplast. Its function is as follows. Involved in protein precursor import into chloroplasts. May be part of an intermediate translocation complex acting as a protein-conducting channel at the inner envelope. This is Putative protein TIC 214 C-terminal part from Anthoceros angustus (Hornwort).